The primary structure comprises 339 residues: MSASGLPFDDFRELIRNLPGPDLGAERAVREREVTLTKPAGSLGRLEEIVAWLATWTGKRTPQVNRPLVAVFAGNHGVTAKNITPFPPSVTAQMVENFAAGGAAINQICIANDLGLKVFDLALEHPTGDITEEAAMDERTCAATMAFGMEAIAGGTDLLCIGEMGIGNTTIAAAIALALFGGTAEDWVGPGTGSTGELMQRKLAAVRLAVALHQPHLQDPLEVLRCLGGREIAAMAGAILAARMEKIPVIVDGFVASAAAAVLYAANPEAIDHCMFGQVSAEPGHRKLLAKMGKEPLLDLGMRLGEGTGAALAANIVKAAALCHSGMATFEQAGVSASK.

Catalysis depends on Glu306, which acts as the Proton acceptor.

This sequence belongs to the CobT family.

It catalyses the reaction 5,6-dimethylbenzimidazole + nicotinate beta-D-ribonucleotide = alpha-ribazole 5'-phosphate + nicotinate + H(+). It participates in nucleoside biosynthesis; alpha-ribazole biosynthesis; alpha-ribazole from 5,6-dimethylbenzimidazole: step 1/2. Functionally, catalyzes the synthesis of alpha-ribazole-5'-phosphate from nicotinate mononucleotide (NAMN) and 5,6-dimethylbenzimidazole (DMB). The sequence is that of Nicotinate-nucleotide--dimethylbenzimidazole phosphoribosyltransferase from Brucella melitensis biotype 1 (strain ATCC 23456 / CCUG 17765 / NCTC 10094 / 16M).